A 143-amino-acid chain; its full sequence is Large ribosomal subunit protein uL11 (143 aa).

This sequence belongs to the universal ribosomal protein uL11 family. In terms of assembly, part of the ribosomal stalk of the 50S ribosomal subunit. Interacts with L10 and the large rRNA to form the base of the stalk. L10 forms an elongated spine to which L12 dimers bind in a sequential fashion forming a multimeric L10(L12)X complex. One or more lysine residues are methylated.

Its function is as follows. Forms part of the ribosomal stalk which helps the ribosome interact with GTP-bound translation factors. The polypeptide is Large ribosomal subunit protein uL11 (Verminephrobacter eiseniae (strain EF01-2)).